Consider the following 359-residue polypeptide: Type II restriction enzyme HgiDI (359 aa).

It catalyses the reaction Endonucleolytic cleavage of DNA to give specific double-stranded fragments with terminal 5'-phosphates.. A P subtype restriction enzyme that recognizes the double-stranded sequence 5'-GRCGYC-3' and cleaves after R-2. In Herpetosiphon aurantiacus (Herpetosiphon giganteus), this protein is Type II restriction enzyme HgiDI.